The sequence spans 959 residues: Isoleucine--tRNA ligase (959 aa).

A 'HIGH' region motif is present at residues 60 to 70 (PYANGSLHMGH). Glutamate 569 is a binding site for L-isoleucyl-5'-AMP. The 'KMSKS' region signature appears at 610 to 614 (KMSKS). Lysine 613 lines the ATP pocket. 4 residues coordinate Zn(2+): cysteine 928, cysteine 931, cysteine 948, and cysteine 951.

The protein belongs to the class-I aminoacyl-tRNA synthetase family. IleS type 1 subfamily. As to quaternary structure, monomer. The cofactor is Zn(2+).

The protein resides in the cytoplasm. The enzyme catalyses tRNA(Ile) + L-isoleucine + ATP = L-isoleucyl-tRNA(Ile) + AMP + diphosphate. In terms of biological role, catalyzes the attachment of isoleucine to tRNA(Ile). As IleRS can inadvertently accommodate and process structurally similar amino acids such as valine, to avoid such errors it has two additional distinct tRNA(Ile)-dependent editing activities. One activity is designated as 'pretransfer' editing and involves the hydrolysis of activated Val-AMP. The other activity is designated 'posttransfer' editing and involves deacylation of mischarged Val-tRNA(Ile). The sequence is that of Isoleucine--tRNA ligase from Crocosphaera subtropica (strain ATCC 51142 / BH68) (Cyanothece sp. (strain ATCC 51142)).